The sequence spans 75 residues: Putative defensin-like protein 119 (75 aa).

Positions 1 to 25 (MAKSTIFAIFMIVFVLGMVTKETKG) are cleaved as a signal peptide. 4 cysteine pairs are disulfide-bonded: C29-C73, C39-C58, C44-C67, and C48-C69.

It belongs to the DEFL family.

It is found in the secreted. The chain is Putative defensin-like protein 119 (LCR53) from Arabidopsis thaliana (Mouse-ear cress).